The chain runs to 132 residues: Ribosome-binding factor A (132 aa).

This sequence belongs to the RbfA family. Monomer. Binds 30S ribosomal subunits, but not 50S ribosomal subunits or 70S ribosomes.

It is found in the cytoplasm. One of several proteins that assist in the late maturation steps of the functional core of the 30S ribosomal subunit. Associates with free 30S ribosomal subunits (but not with 30S subunits that are part of 70S ribosomes or polysomes). Required for efficient processing of 16S rRNA. May interact with the 5'-terminal helix region of 16S rRNA. The protein is Ribosome-binding factor A of Pasteurella multocida (strain Pm70).